A 308-amino-acid polypeptide reads, in one-letter code: Large ribosomal subunit protein mL38 (308 aa).

The N-terminal 17 residues, 1 to 17 (MKRVWPRIPTISNVCRA), are a transit peptide targeting the mitochondrion.

The protein belongs to the phosphatidylethanolamine-binding protein family. Mitochondrion-specific ribosomal protein mL38 subfamily. In terms of assembly, component of the mitochondrial large ribosomal subunit (mt-LSU). Mature yeast 74S mitochondrial ribosomes consist of a small (37S) and a large (54S) subunit. The 37S small subunit contains a 15S ribosomal RNA (15S mt-rRNA) and at least 32 different proteins. The 54S large subunit contains a 21S rRNA (21S mt-rRNA) and at least 45 different proteins.

It localises to the mitochondrion. Functionally, component of the mitochondrial ribosome (mitoribosome), a dedicated translation machinery responsible for the synthesis of mitochondrial genome-encoded proteins, including at least some of the essential transmembrane subunits of the mitochondrial respiratory chain. The mitoribosomes are attached to the mitochondrial inner membrane and translation products are cotranslationally integrated into the membrane. The chain is Large ribosomal subunit protein mL38 (mrpl35) from Schizosaccharomyces pombe (strain 972 / ATCC 24843) (Fission yeast).